We begin with the raw amino-acid sequence, 364 residues long: MKFNEFLNNLSNYEPGKDIEVIAKEYGVKEVIKLASNENPFGTPPKAIECLRQNANKAHLYPDDSMIELKSTLAQKYKVQNENIIIGAGSDQVIEFAIHSKLNSKNAFLQAGVTFAMYEIYAKQCGAKCYKTQSITHNLDEFKKLYETHKDEIKLIFLCLPNNPLGECLDASEATEFIKGVNEDCLVVIDAAYNEFASFKDSKKHLEPCELIKEFDNVLYLGTFSKLYGLGGLRIGYGIANANIISAFYKLRAPFNVSNLALKAAVAAMDDDEFTEKTLENNFSQMELYKEFAKKHNIKIIDSYTNFITYFFDEKNSTDLSEKLLKKGIIIRNLKSYGLNAIRITIGTSYENEKFFTEFDKILR.

K226 is modified (N6-(pyridoxal phosphate)lysine).

The protein belongs to the class-II pyridoxal-phosphate-dependent aminotransferase family. Histidinol-phosphate aminotransferase subfamily. As to quaternary structure, homodimer. Pyridoxal 5'-phosphate serves as cofactor.

The catalysed reaction is L-histidinol phosphate + 2-oxoglutarate = 3-(imidazol-4-yl)-2-oxopropyl phosphate + L-glutamate. The protein operates within amino-acid biosynthesis; L-histidine biosynthesis; L-histidine from 5-phospho-alpha-D-ribose 1-diphosphate: step 7/9. This Campylobacter jejuni subsp. jejuni serotype O:2 (strain ATCC 700819 / NCTC 11168) protein is Histidinol-phosphate aminotransferase.